The following is a 1040-amino-acid chain: Contactin-2 (1040 aa).

An N-terminal signal peptide occupies residues 1 to 30; the sequence is MGTHARKKASLLLLVLATVALVSSPGWSFA. 6 consecutive Ig-like C2-type domains span residues 39–130, 135–224, 241–324, 329–413, 419–506, and 511–605; these read PIFE…AVLR, QEFS…SVFS, PSIK…GRII, PEWL…AELA, PDFR…GILS, and TKIT…ATVL. Intrachain disulfides connect cysteine 63–cysteine 113, cysteine 157–cysteine 209, cysteine 263–cysteine 308, and cysteine 350–cysteine 397. Asparagine 78, asparagine 200, and asparagine 206 each carry an N-linked (GlcNAc...) asparagine glycan. 4 N-linked (GlcNAc...) asparagine glycosylation sites follow: asparagine 463, asparagine 479, asparagine 500, and asparagine 527. Fibronectin type-III domains follow at residues 612 to 710, 715 to 812, 817 to 913, and 917 to 1008; these read PPGG…TKEA, APSG…SAEE, APAK…VKPP, and PPGN…NGGT. The N-linked (GlcNAc...) asparagine glycan is linked to asparagine 777. The short motif at 796-798 is the Cell attachment site element; the sequence is RGD. N-linked (GlcNAc...) asparagine glycans are attached at residues asparagine 832, asparagine 920, and asparagine 942. The tract at residues 895–921 is disordered; that stretch reads RAGTGPASPSADAMTVKPPPRRPPGNI. Alanine 1015 is lipidated: GPI-anchor amidated alanine. Positions 1016 to 1040 are cleaved as a propeptide — removed in mature form; sequence AARPAHPGPAFSCMVILMLAGYQKL.

Belongs to the immunoglobulin superfamily. Contactin family. In terms of tissue distribution, in neural tissues in embryos, and in adult brain, spinal cord and cerebellum.

The protein localises to the cell membrane. In terms of biological role, may play a role in the initial growth and guidance of axons. May be involved in cell adhesion. In conjunction with another transmembrane protein, CNTNAP2, contributes to the organization of axonal domains at nodes of Ranvier by maintaining voltage-gated potassium channels at the juxtaparanodal region. In Rattus norvegicus (Rat), this protein is Contactin-2 (Cntn2).